A 61-amino-acid chain; its full sequence is Bacteriocin leucocin-A (61 aa).

Positions 1–24 (MMNMKPTESYEQLDNSALEQVVGG) are excised as a propeptide. The cysteines at positions 33 and 38 are disulfide-linked.

It belongs to the bacteriocin class IIA/YGNGV family.

The protein resides in the secreted. Functionally, inhibits a wide spectrum of lactic acid bacteria. This chain is Bacteriocin leucocin-A (lcnA), found in Leuconostoc gelidum.